The chain runs to 262 residues: Glutamate racemase (262 aa).

Residues 5–6 (DS) and 37–38 (YG) each bind substrate. C69 serves as the catalytic Proton donor/acceptor. 70–71 (NT) contacts substrate. C181 functions as the Proton donor/acceptor in the catalytic mechanism. Residue 182–183 (TH) participates in substrate binding.

The protein belongs to the aspartate/glutamate racemases family.

It carries out the reaction L-glutamate = D-glutamate. It participates in cell wall biogenesis; peptidoglycan biosynthesis. Provides the (R)-glutamate required for cell wall biosynthesis. The sequence is that of Glutamate racemase from Buchnera aphidicola subsp. Acyrthosiphon pisum (strain APS) (Acyrthosiphon pisum symbiotic bacterium).